A 997-amino-acid polypeptide reads, in one-letter code: Chromosomal passenger complex protein bir1 (997 aa).

BIR repeat units lie at residues R25–Y99 and R120–T194. The Zn(2+) site is built by C163, C166, H183, and C190. Disordered regions lie at residues E217–G329, T370–E527, T682–E701, S755–A782, and R817–V838. Residues T240–N252 are compositionally biased toward polar residues. A compositionally biased stretch (basic residues) spans P288–K299. The segment covering S311–L320 has biased composition (acidic residues). Residues T370–S392 show a composition bias toward polar residues. Residues S408–V423 show a composition bias toward low complexity. Basic and acidic residues predominate over residues E426–L451. Composition is skewed to polar residues over residues K463 to D476 and R485 to I512. Polar residues predominate over residues P756 to E772. A compositionally biased stretch (basic and acidic residues) spans T773–A782. Residues R817 to N830 are compositionally biased toward polar residues.

As to quaternary structure, component of the CPC complex at least composed of ark1, bir1 and pic1. Interacts with the mitotic checkpoint complex (MCC) subunit mad3. Post-translationally, phosphorylated by ark1.

The protein localises to the nucleus. It is found in the cytoplasm. Its subcellular location is the cytoskeleton. It localises to the spindle. The protein resides in the chromosome. The protein localises to the centromere. In terms of biological role, component of the chromosomal passenger complex (CPC), a complex that acts as a key regulator of chromosome segregation and cytokinesis. Has a role in chromosome segregation by recruiting condensin and ark1 kinase to appropriate sites as the cell progresses through mitosis. Ark1 activity depends upon bir1 function and phosphorylation. Ark1 with bir1 function is required for full-scale association with kinetochores and formation of a complex with mad3. This is Chromosomal passenger complex protein bir1 (bir1) from Schizosaccharomyces pombe (strain 972 / ATCC 24843) (Fission yeast).